Reading from the N-terminus, the 60-residue chain is Cytotoxin 5 (60 aa).

Disulfide bonds link C3/C21, C14/C38, C42/C53, and C54/C59.

Belongs to the three-finger toxin family. Short-chain subfamily. Type IA cytotoxin sub-subfamily. Monomer in solution; Homodimer and oligomer in the presence of negatively charged lipids forming a pore with a size ranging between 20 and 30 Angstroms. In terms of tissue distribution, expressed by the venom gland.

Its subcellular location is the secreted. It localises to the target cell membrane. Shows cytolytic activity on many different cells by forming pore in lipid membranes. In vivo, increases heart rate or kills the animal by cardiac arrest. In addition, it binds to heparin with high affinity, interacts with Kv channel-interacting protein 1 (KCNIP1) in a calcium-independent manner, and binds to integrin alpha-V/beta-3 (ITGAV/ITGB3) with moderate affinity. The protein is Cytotoxin 5 of Naja kaouthia (Monocled cobra).